A 181-amino-acid chain; its full sequence is MIQDSEFFRMEGVPITKEEIRAVSIGKLNLDPEDIVLDIGCGSGGMSVEIAKRSKFVYSIDNSEDAKNTTSINLKKFKIENCEVFLGDAKDLISKFDFNKVFIGGTQNIEQILEILKEKKVEKVVANTIVLENGVKIISKFEELGYNVDFVNVSVSYGKKISSGHIMLSKNPITIITATLK.

S-adenosyl-L-methionine contacts are provided by residues Thr16, 40 to 44 (GCGSG), Asp61, and Ala89.

This sequence belongs to the methyltransferase superfamily. Archaeal-type CbiT family.

The catalysed reaction is Co-precorrin-6B + S-adenosyl-L-methionine = Co-precorrin-7 + S-adenosyl-L-homocysteine + CO2. Its pathway is cofactor biosynthesis; adenosylcobalamin biosynthesis; cob(II)yrinate a,c-diamide from sirohydrochlorin (anaerobic route): step 8/10. Functionally, catalyzes the methylation of C-15 in cobalt-precorrin-6B followed by the decarboxylation of C-12 to form cobalt-precorrin-7. The sequence is that of Probable cobalt-precorrin-6B C(15)-methyltransferase (decarboxylating) from Methanococcus maripaludis (strain C6 / ATCC BAA-1332).